Consider the following 314-residue polypeptide: Ribosomal RNA small subunit methyltransferase H (314 aa).

Residues 34–36, Asp-53, Phe-82, Asp-103, and Gln-110 contribute to the S-adenosyl-L-methionine site; that span reads GGH.

The protein belongs to the methyltransferase superfamily. RsmH family.

The protein resides in the cytoplasm. It carries out the reaction cytidine(1402) in 16S rRNA + S-adenosyl-L-methionine = N(4)-methylcytidine(1402) in 16S rRNA + S-adenosyl-L-homocysteine + H(+). Functionally, specifically methylates the N4 position of cytidine in position 1402 (C1402) of 16S rRNA. This chain is Ribosomal RNA small subunit methyltransferase H, found in Limosilactobacillus fermentum (strain NBRC 3956 / LMG 18251) (Lactobacillus fermentum).